Reading from the N-terminus, the 124-residue chain is Small ribosomal subunit protein bS6 (124 aa).

The span at 105 to 115 shows a compositional bias: basic and acidic residues; that stretch reads EVQHEEARKSA. The disordered stretch occupies residues 105-124; sequence EVQHEEARKSAQSDAPVAAA.

Belongs to the bacterial ribosomal protein bS6 family.

Binds together with bS18 to 16S ribosomal RNA. In Polynucleobacter necessarius subsp. necessarius (strain STIR1), this protein is Small ribosomal subunit protein bS6.